The following is a 257-amino-acid chain: uncharacterized protein (257 aa).

A signal peptide spans 1–26 (MKKAFILSAAAAVGLFTFGGVQQASA). Residues 80–135 (AKQSNVKVQDVQKTETAKPAQKTTEKAAADQNTASKAPATAEKTNTTTSAPSSVSA) are disordered. Positions 121 to 134 (EKTNTTTSAPSSVS) are enriched in polar residues. The 114-residue stretch at 141–254 (VELTNAERQK…ESGSIWTQQF (114 aa)) folds into the SCP domain.

This is an uncharacterized protein from Bacillus subtilis (strain 168).